The following is a 451-amino-acid chain: MTHFAQAEPASLSHAATLETIFAPASGQGRSAVAIVRVSGPKAGFLLGALAGYCPEPRRATLAILHDPENGEALDEALVLWFPGPKSFTGEDCAEFHVHGGRAVMAGLLAALGRFEQVRPAEPGEFTRRALLNGKLDLAEVEGLADMIEAETEWQRRQALRQMRGALSRQAEMWRQALLEALSLAEAEIDFSDEADVPPETSRRVAALIEPVLADLRAELGQARAGERIREGLSIVIMGPPNAGKSTLLNALARREVAIVSEIAGTTRDLIEVHLDLKGCAVVLTDTAGLRDNADKIEQIGIARAYERGREADLVLWLSEAEAPVAPPENLGMEVWPVFTKADRVEPLENREGLAISATSGLHLGRLVEAIADFAGKLAPSGHAGLITRARHRQAFERAAAALDRCIREASPVELLAEDLRLAAQALLSLTGRIETEEILGEIFARFCIGK.

3 residues coordinate (6S)-5-formyl-5,6,7,8-tetrahydrofolate: R37, E95, and K135. Positions 232–376 (GLSIVIMGPP…LVEAIADFAG (145 aa)) constitute a TrmE-type G domain. N242 is a binding site for K(+). GTP contacts are provided by residues 242 to 247 (NAGKST), 261 to 267 (SEIAGTT), and 286 to 289 (DTAG). Position 246 (S246) interacts with Mg(2+). Residues S261, I263, and T266 each coordinate K(+). Position 267 (T267) interacts with Mg(2+). (6S)-5-formyl-5,6,7,8-tetrahydrofolate is bound at residue K451.

The protein belongs to the TRAFAC class TrmE-Era-EngA-EngB-Septin-like GTPase superfamily. TrmE GTPase family. As to quaternary structure, homodimer. Heterotetramer of two MnmE and two MnmG subunits. It depends on K(+) as a cofactor.

The protein resides in the cytoplasm. Functionally, exhibits a very high intrinsic GTPase hydrolysis rate. Involved in the addition of a carboxymethylaminomethyl (cmnm) group at the wobble position (U34) of certain tRNAs, forming tRNA-cmnm(5)s(2)U34. This is tRNA modification GTPase MnmE from Beijerinckia indica subsp. indica (strain ATCC 9039 / DSM 1715 / NCIMB 8712).